We begin with the raw amino-acid sequence, 151 residues long: Small ribosomal subunit protein eS6 (151 aa).

Belongs to the eukaryotic ribosomal protein eS6 family.

This is Small ribosomal subunit protein eS6 from Pyrobaculum calidifontis (strain DSM 21063 / JCM 11548 / VA1).